The sequence spans 302 residues: Oxygen-dependent coproporphyrinogen-III oxidase (302 aa).

Serine 94 contacts substrate. 2 residues coordinate a divalent metal cation: histidine 98 and histidine 108. Residue histidine 108 is the Proton donor of the active site. Position 110–112 (110–112 (NVR)) interacts with substrate. A divalent metal cation contacts are provided by histidine 147 and histidine 177. The important for dimerization stretch occupies residues 242–277 (YVEFNLVFDRGTLFGLQSGGRAESILMSMPPVANWR). Residue 260–262 (GGR) coordinates substrate.

It belongs to the aerobic coproporphyrinogen-III oxidase family. Homodimer. A divalent metal cation is required as a cofactor.

It localises to the cytoplasm. The catalysed reaction is coproporphyrinogen III + O2 + 2 H(+) = protoporphyrinogen IX + 2 CO2 + 2 H2O. The protein operates within porphyrin-containing compound metabolism; protoporphyrin-IX biosynthesis; protoporphyrinogen-IX from coproporphyrinogen-III (O2 route): step 1/1. Its function is as follows. Involved in the heme biosynthesis. Catalyzes the aerobic oxidative decarboxylation of propionate groups of rings A and B of coproporphyrinogen-III to yield the vinyl groups in protoporphyrinogen-IX. The sequence is that of Oxygen-dependent coproporphyrinogen-III oxidase from Ralstonia pickettii (strain 12J).